Reading from the N-terminus, the 35-residue chain is Photosystem II reaction center protein T (35 aa).

A helical transmembrane segment spans residues 3 to 23 (ALVYTFLLVSTLGIIFFAIFF).

The protein belongs to the PsbT family. In terms of assembly, PSII is composed of 1 copy each of membrane proteins PsbA, PsbB, PsbC, PsbD, PsbE, PsbF, PsbH, PsbI, PsbJ, PsbK, PsbL, PsbM, PsbT, PsbY, PsbZ, Psb30/Ycf12, at least 3 peripheral proteins of the oxygen-evolving complex and a large number of cofactors. It forms dimeric complexes.

It is found in the plastid. The protein localises to the chloroplast thylakoid membrane. Its function is as follows. Found at the monomer-monomer interface of the photosystem II (PS II) dimer, plays a role in assembly and dimerization of PSII. PSII is a light-driven water plastoquinone oxidoreductase, using light energy to abstract electrons from H(2)O, generating a proton gradient subsequently used for ATP formation. The protein is Photosystem II reaction center protein T of Oenothera argillicola (Appalachian evening primrose).